Here is a 371-residue protein sequence, read N- to C-terminus: Methionine import ATP-binding protein MetN (371 aa).

In terms of domain architecture, ABC transporter spans 29-270 (IRIEGVRKVY…PRHEVTRRFV (242 aa)). Residue 67–74 (GRSGAGKS) coordinates ATP.

Belongs to the ABC transporter superfamily. Methionine importer (TC 3.A.1.24) family. The complex is composed of two ATP-binding proteins (MetN), two transmembrane proteins (MetI) and a solute-binding protein (MetQ).

It is found in the cell inner membrane. It carries out the reaction L-methionine(out) + ATP + H2O = L-methionine(in) + ADP + phosphate + H(+). The catalysed reaction is D-methionine(out) + ATP + H2O = D-methionine(in) + ADP + phosphate + H(+). Part of the ABC transporter complex MetNIQ involved in methionine import. Responsible for energy coupling to the transport system. The protein is Methionine import ATP-binding protein MetN of Rhodopseudomonas palustris (strain BisA53).